A 61-amino-acid chain; its full sequence is Metallothionein-2 (61 aa).

The residue at position 1 (Met-1) is an N-acetylmethionine. Residues Met-1–Cys-29 are beta. 20 residues coordinate a divalent metal cation: Cys-5, Cys-7, Cys-13, Cys-15, Cys-19, Cys-21, Cys-24, Cys-26, Cys-29, Cys-33, Cys-34, Cys-36, Cys-37, Cys-41, Cys-44, Cys-48, Cys-50, Cys-57, Cys-59, and Cys-60. The tract at residues Lys-20 to Lys-25 is antigenic epitope. The interval Lys-30 to Ala-61 is alpha.

This sequence belongs to the metallothionein superfamily. Type 1 family.

Metallothioneins have a high content of cysteine residues that bind various heavy metals; these proteins are transcriptionally regulated by both heavy metals and glucocorticoids. In Macaca fascicularis (Crab-eating macaque), this protein is Metallothionein-2 (MT2).